We begin with the raw amino-acid sequence, 563 residues long: Methylcrotonoyl-CoA carboxylase beta chain, mitochondrial (563 aa).

Residues 1–22 constitute a mitochondrion transit peptide; it reads MWGALRSALRPCCRAAVPPQRA. In terms of domain architecture, CoA carboxyltransferase N-terminal spans 49-306; it reads MKALVSQLHE…QKKMDVTIEP (258 aa). The interval 49–555 is carboxyltransferase; that stretch reads MKALVSQLHE…SAALNAPIQR (507 aa). Lysine 70 is modified (N6-acetyllysine; alternate). An N6-succinyllysine; alternate modification is found at lysine 70. Residue lysine 141 is modified to N6-succinyllysine. Positions 309-555 constitute a CoA carboxyltransferase C-terminal domain; sequence EPLFPADELY…SAALNAPIQR (247 aa). The acyl-CoA binding stretch occupies residues 343–372; sequence RFNEFKALYGDTLVTGFARIFGYPVGIIGN. An N6-succinyllysine modification is found at lysine 433. N6-acetyllysine; alternate is present on lysine 495. Lysine 495 bears the N6-succinyllysine; alternate mark. Lysine 511 is subject to N6-acetyllysine.

Belongs to the AccD/PCCB family. In terms of assembly, probably a dodecamer composed of six biotin-containing alpha subunits (MCCC1) and six beta (MCCC2) subunits.

It is found in the mitochondrion matrix. It catalyses the reaction 3-methylbut-2-enoyl-CoA + hydrogencarbonate + ATP = 3-methyl-(2E)-glutaconyl-CoA + ADP + phosphate + H(+). Its pathway is amino-acid degradation; L-leucine degradation; (S)-3-hydroxy-3-methylglutaryl-CoA from 3-isovaleryl-CoA: step 2/3. In terms of biological role, carboxyltransferase subunit of the 3-methylcrotonyl-CoA carboxylase, an enzyme that catalyzes the conversion of 3-methylcrotonyl-CoA to 3-methylglutaconyl-CoA, a critical step for leucine and isovaleric acid catabolism. This Mus musculus (Mouse) protein is Methylcrotonoyl-CoA carboxylase beta chain, mitochondrial (Mccc2).